The primary structure comprises 240 residues: Ribosomal RNA small subunit methyltransferase G (240 aa).

S-adenosyl-L-methionine is bound by residues glycine 79, phenylalanine 84, 130 to 131, and arginine 149; that span reads AE.

Belongs to the methyltransferase superfamily. RNA methyltransferase RsmG family.

It localises to the cytoplasm. Its function is as follows. Specifically methylates the N7 position of a guanine in 16S rRNA. The chain is Ribosomal RNA small subunit methyltransferase G from Desulforamulus reducens (strain ATCC BAA-1160 / DSM 100696 / MI-1) (Desulfotomaculum reducens).